Here is a 282-residue protein sequence, read N- to C-terminus: Nudix hydrolase 7 (282 aa).

The Nudix hydrolase domain occupies 101–233 (SHVVGAGALV…KNEMFKFMAN (133 aa)). A Nudix box motif is present at residues 139–160 (GVINEGEDIWTGVAREVEEETG). 2 residues coordinate Mg(2+): E154 and E158.

This sequence belongs to the Nudix hydrolase family. Homodimer. Interacts with RACK1A, GG1 and GG2. Mg(2+) is required as a cofactor. In terms of tissue distribution, expressed in stems, leaves, roots, flowers and siliques.

Its subcellular location is the nucleus. It localises to the cytoplasm. The protein localises to the cell membrane. It catalyses the reaction ADP-D-ribose + H2O = D-ribose 5-phosphate + AMP + 2 H(+). The catalysed reaction is NAD(+) + H2O = beta-nicotinamide D-ribonucleotide + AMP + 2 H(+). The enzyme catalyses NADH + H2O = reduced beta-nicotinamide D-ribonucleotide + AMP + 2 H(+). With respect to regulation, not inhibited by fluoride. Mediates the hydrolysis of some nucleoside diphosphate derivatives. Can use both NADH and ADP-ribose as substrates, but not 8-oxo-dGTP, cyclic ADP-ribose, GDP-mannose, UDP-glucose, ATP, or GTP. Exerts negative control of EDS1 signaling. In Arabidopsis thaliana (Mouse-ear cress), this protein is Nudix hydrolase 7 (NUDT7).